A 419-amino-acid chain; its full sequence is Inositol-tetrakisphosphate 1-kinase (419 aa).

1D-myo-inositol 1,3,4-trisphosphate is bound at residue Lys-18. Positions 106 and 157 each coordinate ATP. The 209-residue stretch at 117-325 (EAYMKDDRIC…IASVLQGQSS (209 aa)) folds into the ATP-grasp domain. 2 residues coordinate 1D-myo-inositol 1,3,4-trisphosphate: His-167 and Lys-199. ATP contacts are provided by residues 188–199 (QNFINHNAVLYK), Ser-214, Ser-232, and Ser-236. Mg(2+)-binding residues include Asp-281, Asp-295, and Asn-297. Asn-297 lines the 1D-myo-inositol 1,3,4-trisphosphate pocket. At Lys-388 the chain carries N6-acetyllysine; by EP300 and CREBBP. Ser-401 carries the phosphoserine modification. At Lys-415 the chain carries N6-acetyllysine; by EP300 and CREBBP.

This sequence belongs to the ITPK1 family. Monomer. Interacts with GPS1/COPS1. Mg(2+) serves as cofactor. Acetylation by EP300 and CREBBP destabilizes ITPK1, and down-regulates enzymatic activity. Deacetylated by SIRT1.

The enzyme catalyses 1D-myo-inositol 3,4,5,6-tetrakisphosphate + ATP = 1D-myo-inositol 1,3,4,5,6-pentakisphosphate + ADP + H(+). It carries out the reaction 1D-myo-inositol 1,3,4-trisphosphate + ATP = 1D-myo-inositol 1,3,4,5-tetrakisphosphate + ADP + H(+). The catalysed reaction is 1D-myo-inositol 1,3,4-trisphosphate + ATP = 1D-myo-inositol 1,3,4,6-tetrakisphosphate + ADP + H(+). It catalyses the reaction 1D-myo-inositol 3,4,6-trisphosphate + ATP = 1D-myo-inositol 1,3,4,6-tetrakisphosphate + ADP + H(+). The enzyme catalyses 1D-myo-inositol 1,3,4-trisphosphate + 1D-myo-inositol 1,3,4,5,6-pentakisphosphate = 1D-myo-inositol 3,4,5,6-tetrakisphosphate + 1D-myo-inositol 1,3,4,6-tetrakisphosphate. It carries out the reaction 1D-myo-inositol 1,3,4-trisphosphate + 1D-myo-inositol 1,3,4,5,6-pentakisphosphate = 1D-myo-inositol 3,4,5,6-tetrakisphosphate + 1D-myo-inositol 1,3,4,5-tetrakisphosphate. In terms of biological role, kinase that can phosphorylate various inositol polyphosphate such as Ins(3,4,5,6)P4 or Ins(1,3,4)P3. Phosphorylates Ins(3,4,5,6)P4 at position 1 to form Ins(1,3,4,5,6)P5. This reaction is thought to have regulatory importance, since Ins(3,4,5,6)P4 is an inhibitor of plasma membrane Ca(2+)-activated Cl(-) channels, while Ins(1,3,4,5,6)P5 is not. Also phosphorylates Ins(1,3,4)P3 on O-5 and O-6 to form Ins(1,3,4,6)P4, an essential molecule in the hexakisphosphate (InsP6) pathway. Also acts as an inositol polyphosphate phosphatase that dephosphorylates Ins(1,3,4,5)P4 and Ins(1,3,4,6)P4 to Ins(1,3,4)P3, and Ins(1,3,4,5,6)P5 to Ins(3,4,5,6)P4. May also act as an isomerase that interconverts the inositol tetrakisphosphate isomers Ins(1,3,4,5)P4 and Ins(1,3,4,6)P4 in the presence of ADP and magnesium. Probably acts as the rate-limiting enzyme of the InsP6 pathway. Modifies TNF-alpha-induced apoptosis by interfering with the activation of TNFRSF1A-associated death domain. Plays an important role in MLKL-mediated necroptosis. Produces highly phosphorylated inositol phosphates such as inositolhexakisphosphate (InsP6) which bind to MLKL mediating the release of an N-terminal auto-inhibitory region leading to its activation. Essential for activated phospho-MLKL to oligomerize and localize to the cell membrane during necroptosis. This is Inositol-tetrakisphosphate 1-kinase (ITPK1) from Bos taurus (Bovine).